A 146-amino-acid polypeptide reads, in one-letter code: Snaclec mucetin subunit beta (146 aa).

The signal sequence occupies residues M1–A23. Cystine bridges form between C27/C38, C55/C144, and C121/C136. The C-type lectin domain maps to Y34 to K145.

Belongs to the snaclec family. Dimer and tetramer of heterodimers of alpha and beta subunits ((alphabeta)(2) and (alphabeta)(4)); disulfide-linked. These two multimeric forms are found. Post-translationally, the complex is glycosylated. In terms of tissue distribution, expressed by the venom gland.

Its subcellular location is the secreted. Potent platelet activator that acts via GPIb (GP1BA/GP1BB). After activation by the toxin, the receptor is redistributed on platelet surface thanks to cytoskeletal translocation. The indirect activation of integrin alpha-IIb/beta-3 (ITGA2B/ITGB3) also induced by the toxin is downstream the cytoskeletal translocation of GPIb. This Protobothrops mucrosquamatus (Taiwan habu) protein is Snaclec mucetin subunit beta.